Here is a 107-residue protein sequence, read N- to C-terminus: Immunoglobulin kappa constant (107 aa).

The 98-residue stretch at 6–103 (PTVSIFPPSS…STSPIVKSFN (98 aa)) folds into the Ig-like domain. A disulfide bond links Cys-27 and Cys-87.

This Mus musculus (Mouse) protein is Immunoglobulin kappa constant.